Reading from the N-terminus, the 705-residue chain is Ribosomal RNA large subunit methyltransferase K/L (705 aa).

In terms of domain architecture, THUMP spans 43–154; it reads VVYRCCLWSR…GEKGILGFDL (112 aa).

It belongs to the methyltransferase superfamily. RlmKL family.

Its subcellular location is the cytoplasm. The catalysed reaction is guanosine(2445) in 23S rRNA + S-adenosyl-L-methionine = N(2)-methylguanosine(2445) in 23S rRNA + S-adenosyl-L-homocysteine + H(+). It catalyses the reaction guanosine(2069) in 23S rRNA + S-adenosyl-L-methionine = N(2)-methylguanosine(2069) in 23S rRNA + S-adenosyl-L-homocysteine + H(+). Functionally, specifically methylates the guanine in position 2445 (m2G2445) and the guanine in position 2069 (m7G2069) of 23S rRNA. The protein is Ribosomal RNA large subunit methyltransferase K/L of Aliivibrio salmonicida (strain LFI1238) (Vibrio salmonicida (strain LFI1238)).